The primary structure comprises 100 residues: MNLSPREKDKLLISMAAMVARRRLERGVKLNYPEAIALISDFVVEGARDGRAVSELMEAGAHVITRDQVMDGIAEMIHDVQVEATFPDGTKLVTVHEPIR.

It belongs to the urease gamma subunit family. Heterotrimer of UreA (gamma), UreB (beta) and UreC (alpha) subunits. Three heterotrimers associate to form the active enzyme.

The protein resides in the cytoplasm. The enzyme catalyses urea + 2 H2O + H(+) = hydrogencarbonate + 2 NH4(+). It participates in nitrogen metabolism; urea degradation; CO(2) and NH(3) from urea (urease route): step 1/1. The polypeptide is Urease subunit gamma (Allorhizobium ampelinum (strain ATCC BAA-846 / DSM 112012 / S4) (Agrobacterium vitis (strain S4))).